A 325-amino-acid polypeptide reads, in one-letter code: Urease accessory protein UreD (325 aa).

It belongs to the UreD family. UreD, UreF and UreG form a complex that acts as a GTP-hydrolysis-dependent molecular chaperone, activating the urease apoprotein by helping to assemble the nickel containing metallocenter of UreC. The UreE protein probably delivers the nickel.

It localises to the cytoplasm. Functionally, required for maturation of urease via the functional incorporation of the urease nickel metallocenter. In terms of biological role, expression of the urease operon increases the likelihood of bacterial survival by contributing to acid resistance in vitro and in vivo in BALB/c mice. Y.enterocolitica enters the body via an oral path and must survive the acidic stomach before being able to colonize the intestinal mucosa. The chain is Urease accessory protein UreD from Yersinia enterocolitica.